Here is a 206-residue protein sequence, read N- to C-terminus: Cytochrome b6-f complex iron-sulfur subunit, chloroplastic (206 aa).

Residues 1 to 29 (MAMITSRRAAAPCKAQATRRSRVMSVVRA) constitute a chloroplast transit peptide. A helical transmembrane segment spans residues 48-68 (ILLGGASLPVGSLALGYGAFF). The region spanning 92 to 188 (ANAWLATHQK…CDVQEDGLVT (97 aa)) is the Rieske domain. [2Fe-2S] cluster contacts are provided by C134, H136, C152, and H155. A disulfide bridge links C139 with C154.

This sequence belongs to the Rieske iron-sulfur protein family. The 4 large subunits of the cytochrome b6-f complex are cytochrome b6, subunit IV (17 kDa polypeptide, petD), cytochrome f and the Rieske protein, while the 4 small subunits are petG, petL, petM and petN. The complex functions as a dimer. [2Fe-2S] cluster is required as a cofactor.

Its subcellular location is the plastid. The protein localises to the chloroplast thylakoid membrane. It carries out the reaction 2 oxidized [plastocyanin] + a plastoquinol + 2 H(+)(in) = 2 reduced [plastocyanin] + a plastoquinone + 4 H(+)(out). Its function is as follows. Component of the cytochrome b6-f complex, which mediates electron transfer between photosystem II (PSII) and photosystem I (PSI), cyclic electron flow around PSI, and state transitions. This is Cytochrome b6-f complex iron-sulfur subunit, chloroplastic (petC) from Volvox carteri (Green alga).